We begin with the raw amino-acid sequence, 120 residues long: Large ribosomal subunit protein bL20 (120 aa).

This sequence belongs to the bacterial ribosomal protein bL20 family.

Functionally, binds directly to 23S ribosomal RNA and is necessary for the in vitro assembly process of the 50S ribosomal subunit. It is not involved in the protein synthesizing functions of that subunit. The protein is Large ribosomal subunit protein bL20 of Chlamydia abortus (strain DSM 27085 / S26/3) (Chlamydophila abortus).